A 322-amino-acid chain; its full sequence is Mitochondrial glutamate carrier 1 (322 aa).

Solcar repeat units lie at residues 6-93, 101-214, and 223-312; these read ISLP…FRYQ, LTLF…LNEL, and SPFY…GIAE. Helical transmembrane passes span 12 to 32, 62 to 82, 107 to 127, 189 to 209, 223 to 243, and 292 to 312; these read LING…IDLA, YFGM…EKAI, MLAG…MEML, GLGA…PLFA, SPFY…AVAV, and ALVI…GIAE.

This sequence belongs to the mitochondrial carrier (TC 2.A.29) family.

The protein localises to the mitochondrion inner membrane. The enzyme catalyses L-glutamate(in) + H(+)(in) = L-glutamate(out) + H(+)(out). Its function is as follows. Mitochondrial glutamate/H(+) symporter. Responsible for the transport of glutamate from the cytosol into the mitochondrial matrix with the concomitant import of a proton. Plays a role in the control of glucose-stimulated insulin secretion. This chain is Mitochondrial glutamate carrier 1 (SLC25A22), found in Bos taurus (Bovine).